The chain runs to 615 residues: Granule-bound starch synthase 1, chloroplastic/amyloplastic (615 aa).

The transit peptide at 1 to 70 (MAALVTSQLA…DRRCLSMVVR (70 aa)) directs the protein to the chloroplast. Lysine 91 provides a ligand contact to ADP-alpha-D-glucose.

Belongs to the glycosyltransferase 1 family. Bacterial/plant glycogen synthase subfamily. As to expression, found in seeds and pollen.

The protein resides in the plastid. It is found in the chloroplast. Its subcellular location is the amyloplast. It carries out the reaction an NDP-alpha-D-glucose + [(1-&gt;4)-alpha-D-glucosyl](n) = [(1-&gt;4)-alpha-D-glucosyl](n+1) + a ribonucleoside 5'-diphosphate + H(+). The protein operates within glycan biosynthesis; starch biosynthesis. This chain is Granule-bound starch synthase 1, chloroplastic/amyloplastic (WAXY), found in Triticum aestivum (Wheat).